A 479-amino-acid chain; its full sequence is Ribosomal RNA small subunit methyltransferase F (479 aa).

S-adenosyl-L-methionine contacts are provided by residues 125–131 (AAAPGSK), E149, D176, and D194. Catalysis depends on C247, which acts as the Nucleophile.

This sequence belongs to the class I-like SAM-binding methyltransferase superfamily. RsmB/NOP family.

The protein localises to the cytoplasm. It carries out the reaction cytidine(1407) in 16S rRNA + S-adenosyl-L-methionine = 5-methylcytidine(1407) in 16S rRNA + S-adenosyl-L-homocysteine + H(+). Functionally, specifically methylates the cytosine at position 1407 (m5C1407) of 16S rRNA. The chain is Ribosomal RNA small subunit methyltransferase F from Salmonella paratyphi C (strain RKS4594).